Reading from the N-terminus, the 192-residue chain is Nucleotidase CA_C3379 (192 aa).

Belongs to the 5'(3')-deoxyribonucleotidase family. Mg(2+) serves as cofactor.

It catalyses the reaction sugar phosphate + H2O = sugar + phosphate.. Functionally, catalyzes the dephosphorylation of nucleotide monophosphates and of different sugar phosphates in vitro. In Clostridium acetobutylicum (strain ATCC 824 / DSM 792 / JCM 1419 / IAM 19013 / LMG 5710 / NBRC 13948 / NRRL B-527 / VKM B-1787 / 2291 / W), this protein is Nucleotidase CA_C3379.